Reading from the N-terminus, the 174-residue chain is ATP synthase subunit delta (174 aa).

It belongs to the ATPase delta chain family. As to quaternary structure, F-type ATPases have 2 components, F(1) - the catalytic core - and F(0) - the membrane proton channel. F(1) has five subunits: alpha(3), beta(3), gamma(1), delta(1), epsilon(1). F(0) has three main subunits: a(1), b(2) and c(10-14). The alpha and beta chains form an alternating ring which encloses part of the gamma chain. F(1) is attached to F(0) by a central stalk formed by the gamma and epsilon chains, while a peripheral stalk is formed by the delta and b chains.

It localises to the cell inner membrane. In terms of biological role, f(1)F(0) ATP synthase produces ATP from ADP in the presence of a proton or sodium gradient. F-type ATPases consist of two structural domains, F(1) containing the extramembraneous catalytic core and F(0) containing the membrane proton channel, linked together by a central stalk and a peripheral stalk. During catalysis, ATP synthesis in the catalytic domain of F(1) is coupled via a rotary mechanism of the central stalk subunits to proton translocation. This protein is part of the stalk that links CF(0) to CF(1). It either transmits conformational changes from CF(0) to CF(1) or is implicated in proton conduction. The polypeptide is ATP synthase subunit delta (Fusobacterium nucleatum subsp. nucleatum (strain ATCC 25586 / DSM 15643 / BCRC 10681 / CIP 101130 / JCM 8532 / KCTC 2640 / LMG 13131 / VPI 4355)).